Reading from the N-terminus, the 419-residue chain is Serine hydroxymethyltransferase (419 aa).

(6S)-5,6,7,8-tetrahydrofolate-binding positions include Leu119 and 123–125 (GHL). Residue Lys228 is modified to N6-(pyridoxal phosphate)lysine.

This sequence belongs to the SHMT family. In terms of assembly, homodimer. Pyridoxal 5'-phosphate serves as cofactor.

Its subcellular location is the cytoplasm. The catalysed reaction is (6R)-5,10-methylene-5,6,7,8-tetrahydrofolate + glycine + H2O = (6S)-5,6,7,8-tetrahydrofolate + L-serine. The protein operates within one-carbon metabolism; tetrahydrofolate interconversion. It functions in the pathway amino-acid biosynthesis; glycine biosynthesis; glycine from L-serine: step 1/1. Its function is as follows. Catalyzes the reversible interconversion of serine and glycine with tetrahydrofolate (THF) serving as the one-carbon carrier. This reaction serves as the major source of one-carbon groups required for the biosynthesis of purines, thymidylate, methionine, and other important biomolecules. Also exhibits THF-independent aldolase activity toward beta-hydroxyamino acids, producing glycine and aldehydes, via a retro-aldol mechanism. This Desulfosudis oleivorans (strain DSM 6200 / JCM 39069 / Hxd3) (Desulfococcus oleovorans) protein is Serine hydroxymethyltransferase.